The sequence spans 1478 residues: Serine/threonine-protein kinase BCK1/SLK1/SSP31 (1478 aa).

Disordered stretches follow at residues M1–Q70, T99–S126, N217–H359, and F373–L427. Residues P29–K49 are compositionally biased toward low complexity. Polar residues-rich tracts occupy residues Q58 to Q70 and T99 to N110. Low complexity predominate over residues G111–S126. Residues I223–S233 are compositionally biased toward basic residues. 2 stretches are compositionally biased toward polar residues: residues D253–S273 and L281–Y297. 2 stretches are compositionally biased toward low complexity: residues R298–N320 and S342–S353. 2 stretches are compositionally biased toward polar residues: residues N386–N396 and T407–T420. The residue at position 407 (T407) is a Phosphothreonine. S411 and S491 each carry phosphoserine. Positions K644–T671 are disordered. Over residues K659–T671 the composition is skewed to low complexity. At S747 the chain carries Phosphoserine. 4 disordered regions span residues L752–H877, K895–S939, A960–K1021, and T1053–R1116. Positions T765–Q777 are enriched in polar residues. The segment covering L779–P809 has biased composition (basic and acidic residues). A compositionally biased stretch (polar residues) spans A813–N827. S816 bears the Phosphoserine mark. 2 stretches are compositionally biased toward low complexity: residues Q851–S870 and N914–S925. Acidic residues predominate over residues D967–S977. Residues N994 to E1011 show a composition bias toward basic and acidic residues. 2 positions are modified to phosphoserine: S1058 and S1061. Positions S1058–T1083 are enriched in low complexity. S1134 is subject to Phosphoserine; by PKC. Positions W1175–S1440 constitute a Protein kinase domain. ATP contacts are provided by residues I1181–V1189 and K1204. D1303 acts as the Proton acceptor in catalysis.

It belongs to the protein kinase superfamily. STE Ser/Thr protein kinase family. MAP kinase kinase kinase subfamily.

Its subcellular location is the cytoplasm. The catalysed reaction is L-seryl-[protein] + ATP = O-phospho-L-seryl-[protein] + ADP + H(+). The enzyme catalyses L-threonyl-[protein] + ATP = O-phospho-L-threonyl-[protein] + ADP + H(+). Serine/threonine protein kinase involved in a signal transduction pathway that plays a role in yeast cell morphogenesis and cell growth. This pathway seems to start by SMP3; then involve the kinase PKC1 that may act on this kinase. BCK1 probably phosphorylates MKK1 and MKK2 which themselves phosphorylate the MPK1 kinase. The sequence is that of Serine/threonine-protein kinase BCK1/SLK1/SSP31 (BCK1) from Saccharomyces cerevisiae (strain ATCC 204508 / S288c) (Baker's yeast).